Reading from the N-terminus, the 382-residue chain is S-adenosylmethionine synthase (382 aa).

His16 contributes to the ATP binding site. Asp18 contacts Mg(2+). Residue Glu44 coordinates K(+). Residues Glu57 and Gln100 each contribute to the L-methionine site. The interval 100-110 (QSPDIAQGVDN) is flexible loop. Residues 165–167 (DAK), 231–232 (RF), Asp240, 246–247 (RK), and Lys267 contribute to the ATP site. Asp240 lines the L-methionine pocket. Lys271 contacts L-methionine.

It belongs to the AdoMet synthase family. As to quaternary structure, homotetramer; dimer of dimers. Mg(2+) serves as cofactor. The cofactor is K(+).

The protein resides in the cytoplasm. The catalysed reaction is L-methionine + ATP + H2O = S-adenosyl-L-methionine + phosphate + diphosphate. Its pathway is amino-acid biosynthesis; S-adenosyl-L-methionine biosynthesis; S-adenosyl-L-methionine from L-methionine: step 1/1. Functionally, catalyzes the formation of S-adenosylmethionine (AdoMet) from methionine and ATP. The overall synthetic reaction is composed of two sequential steps, AdoMet formation and the subsequent tripolyphosphate hydrolysis which occurs prior to release of AdoMet from the enzyme. This Legionella pneumophila (strain Paris) protein is S-adenosylmethionine synthase.